The following is a 1103-amino-acid chain: Mediator of RNA polymerase II transcription subunit 14 (1103 aa).

2 disordered regions span residues 22-61 (LNGVSSAPAGSSQLGNPVGLHNGSLPTNGVQHPDSRGSDE) and 1043-1067 (TTPKALDSRTSHDAPAANNQSPAIR). Positions 23-36 (NGVSSAPAGSSQLG) are enriched in polar residues.

Belongs to the Mediator complex subunit 14 family. In terms of assembly, component of the Mediator complex.

Its subcellular location is the nucleus. In terms of biological role, component of the Mediator complex, a coactivator involved in the regulated transcription of nearly all RNA polymerase II-dependent genes. Mediator functions as a bridge to convey information from gene-specific regulatory proteins to the basal RNA polymerase II transcription machinery. Mediator is recruited to promoters by direct interactions with regulatory proteins and serves as a scaffold for the assembly of a functional preinitiation complex with RNA polymerase II and the general transcription factors. This is Mediator of RNA polymerase II transcription subunit 14 (rgr1) from Emericella nidulans (strain FGSC A4 / ATCC 38163 / CBS 112.46 / NRRL 194 / M139) (Aspergillus nidulans).